The primary structure comprises 319 residues: Probable casein kinase II subunit alpha homolog (319 aa).

The 280-residue stretch at 37–316 (YQIYQRMGRG…ADECLRHPLF (280 aa)) folds into the Protein kinase domain. ATP contacts are provided by residues 43–51 (MGRGKYSEV) and lysine 64. Aspartate 151 functions as the Proton acceptor in the catalytic mechanism.

The protein belongs to the protein kinase superfamily. Ser/Thr protein kinase family. CK2 subfamily. As to quaternary structure, tetramer composed of two alpha chains, one beta chain and one beta' chain.

The enzyme catalyses L-seryl-[protein] + ATP = O-phospho-L-seryl-[protein] + ADP + H(+). It catalyses the reaction L-threonyl-[protein] + ATP = O-phospho-L-threonyl-[protein] + ADP + H(+). Functionally, catalytic subunit of a constitutively active serine/threonine-protein kinase complex that phosphorylates a large number of substrates containing acidic residues C-terminal to the phosphorylated serine or threonine. This Encephalitozoon cuniculi (strain GB-M1) (Microsporidian parasite) protein is Probable casein kinase II subunit alpha homolog (CKA1).